A 1225-amino-acid chain; its full sequence is RNA-directed RNA polymerase VP2 (1225 aa).

Positions 497–727 constitute a RdRp catalytic domain; it reads LFLSFMPYTI…NSIVLLQQLV (231 aa).

It belongs to the reoviridae RNA-directed RNA polymerase family. Interacts with VP6.

It catalyses the reaction RNA(n) + a ribonucleoside 5'-triphosphate = RNA(n+1) + diphosphate. Functionally, RNA-directed RNA polymerase that is involved in transcription and genome replication. Following infection, it catalyzes the synthesis of fully conservative plus strands. After core assembly, which consists in recruitment of one capped plus-strand for each genomic segments and polymerase complexes, the polymerase switches mode and catalyzes the synthesis of complementary minus-strands. The polypeptide is RNA-directed RNA polymerase VP2 (S2) (Lymantria dispar (Gypsy moth)).